A 311-amino-acid polypeptide reads, in one-letter code: MIDVLFLGTGGGMPTPRRSLSSLLLNFKGCKILVDCGEGTQLSMKNAKTGFKDIDIICITHCHGDHIIGFPGILSTIGNSGRTNPLTIIGPKDITRIVKGLTVITPYLPYELNIIENPMQKLSFNVTKENLKLESGGELLIDTLELNHSIPCIAYNFTVKRKPKFNREKAVNYNIPRKFWGDLQVGKNINYEGRVYTPSMVLGKERKGIKISFVTDTTPIDSIISFIEESDMFICEGTYGTDDDIDKAIKNKHMTFSQAATLAFRGNVKELILTHFGVTMERPEEFLGFARKIFKNSYVAEDRMIKSLKFD.

Zn(2+)-binding residues include H61, H63, D65, H66, H148, D216, and H275. D65 serves as the catalytic Proton acceptor.

The protein belongs to the RNase Z family. In terms of assembly, homodimer. The cofactor is Zn(2+).

The enzyme catalyses Endonucleolytic cleavage of RNA, removing extra 3' nucleotides from tRNA precursor, generating 3' termini of tRNAs. A 3'-hydroxy group is left at the tRNA terminus and a 5'-phosphoryl group is left at the trailer molecule.. Functionally, zinc phosphodiesterase, which displays some tRNA 3'-processing endonuclease activity. Probably involved in tRNA maturation, by removing a 3'-trailer from precursor tRNA. The sequence is that of Ribonuclease Z from Clostridium novyi (strain NT).